The following is a 405-amino-acid chain: 11-beta-hydroxysteroid dehydrogenase type 2 (405 aa).

82 to 111 (TRAVLITGCDSGFGKETAKKLDSMGFTVLA) contributes to the NAD(+) binding site. Residue serine 219 coordinates substrate. Tyrosine 232 functions as the Proton acceptor in the catalytic mechanism. The segment at 335–339 (RRRYY) is essential for protein stability. Positions 377 to 387 (QPGQPGTTPPQ) are enriched in low complexity. The segment at 377-405 (QPGQPGTTPPQDAAQDPNLSPGPSPAVAR) is disordered. Over residues 396 to 405 (SPGPSPAVAR) the composition is skewed to pro residues.

It belongs to the short-chain dehydrogenases/reductases (SDR) family. In terms of assembly, interacts with ligand-free cytoplasmic NR3C2. As to expression, expressed in kidney, placenta, pancreas, prostate, ovary, small intestine and colon, and in lower levels in the spleen and testis. At midgestation, expressed at high levels in placenta and in fetal kidney and, at much lower levels, in fetal lung and testis.

It is found in the microsome. The protein localises to the endoplasmic reticulum. It catalyses the reaction an 11beta-hydroxysteroid + NAD(+) = an 11-oxosteroid + NADH + H(+). The enzyme catalyses cortisol + NAD(+) = cortisone + NADH + H(+). It carries out the reaction corticosterone + NAD(+) = 11-dehydrocorticosterone + NADH + H(+). The catalysed reaction is 11beta,17beta-dihydroxyandrost-4-ene-3-one + NAD(+) = 17beta-hydroxyandrost-4-ene-3,11-dione + NADH + H(+). It catalyses the reaction 11beta-hydroxyandrost-4-ene-3,17-dione + NAD(+) = androst-4-ene-3,11,17-trione + NADH + H(+). Its pathway is steroid metabolism. Its activity is regulated as follows. Inhibited by glycyrrhetinic acid (derived from liquorice). Catalyzes the conversion of biologically active 11beta-hydroxyglucocorticoids (11beta-hydroxysteroid) such as cortisol, to inactive 11-ketoglucocorticoids (11-oxosteroid) such as cortisone, in the presence of NAD(+). Functions as a dehydrogenase (oxidase), thereby decreasing the concentration of active glucocorticoids, thus protecting the nonselective mineralocorticoid receptor from occupation by glucocorticoids. Plays an important role in maintaining glucocorticoids balance during preimplantation and protects the fetus from excessive maternal corticosterone exposure. Catalyzes the oxidation of 11beta-hydroxytestosterone (11beta,17beta-dihydroxyandrost-4-ene-3-one) to 11-ketotestosterone (17beta-hydroxyandrost-4-ene-3,11-dione), a major bioactive androgen. Catalyzes the conversion of 11beta-hydroxyandrostenedione (11beta-hydroxyandrost-4-ene-3,17-dione) to 11-ketoandrostenedione (androst-4-ene-3,11,17-trione), which can be further metabolized to 11-ketotestosterone. Converts 7-beta-25-dihydroxycholesterol to 7-oxo-25-hydroxycholesterol in vitro. 7-beta-25-dihydroxycholesterol (not 7-oxo-25-hydroxycholesterol) acts as a ligand for the G-protein-coupled receptor (GPCR) Epstein-Barr virus-induced gene 2 (EBI2) and may thereby regulate immune cell migration. May protect ovulating oocytes and fertilizing spermatozoa from the adverse effects of cortisol. This chain is 11-beta-hydroxysteroid dehydrogenase type 2, found in Homo sapiens (Human).